The following is a 301-amino-acid chain: uncharacterized protein (301 aa).

Catalysis depends on charge relay system residues S44 and Y107. The active-site Proton donor is Y133. The active-site Schiff-base intermediate with substrate is K162.

The protein belongs to the DapA family. As to quaternary structure, homotetramer.

It localises to the cytoplasm. This is an uncharacterized protein from Pyrobaculum arsenaticum (strain DSM 13514 / JCM 11321 / PZ6).